Consider the following 417-residue polypeptide: Cyanophycinase (417 aa).

The first 23 residues, 1 to 23 (MIRSFIRSSALLLALLPVTGYSA), serve as a signal peptide directing secretion. Residues S169, D188, and H222 each act as charge relay system in the active site.

It belongs to the peptidase S51 family.

It is found in the secreted. The enzyme catalyses [L-4-(L-arginin-2-N-yl)aspartate](n) + H2O = [L-4-(L-arginin-2-N-yl)aspartate](n-1) + L-4-(L-arginin-2-N-yl)aspartate. Its activity is regulated as follows. Inhibited by serine protease inhibitors. Inhibited by N-Bromo-succinimide. Its function is as follows. Exopeptidase that catalyzes the hydrolytic cleavage of multi-L-arginyl-poly-L-aspartic acid (cyanophycin; a water-insoluble reserve polymer) into aspartate-arginine dipeptides. In Pseudomonas anguilliseptica, this protein is Cyanophycinase (cphE).